We begin with the raw amino-acid sequence, 70 residues long: Large ribosomal subunit protein bL31 (70 aa).

Residues cysteine 16, cysteine 18, cysteine 37, and cysteine 40 each coordinate Zn(2+).

Belongs to the bacterial ribosomal protein bL31 family. Type A subfamily. As to quaternary structure, part of the 50S ribosomal subunit. It depends on Zn(2+) as a cofactor.

In terms of biological role, binds the 23S rRNA. The sequence is that of Large ribosomal subunit protein bL31 from Haemophilus influenzae (strain 86-028NP).